The primary structure comprises 286 residues: 4-diphosphocytidyl-2-C-methyl-D-erythritol kinase (286 aa).

Residue Lys11 is part of the active site. 94–104 (PMGGGIGGGSS) lines the ATP pocket. The active site involves Asp136.

It belongs to the GHMP kinase family. IspE subfamily.

It carries out the reaction 4-CDP-2-C-methyl-D-erythritol + ATP = 4-CDP-2-C-methyl-D-erythritol 2-phosphate + ADP + H(+). It participates in isoprenoid biosynthesis; isopentenyl diphosphate biosynthesis via DXP pathway; isopentenyl diphosphate from 1-deoxy-D-xylulose 5-phosphate: step 3/6. Functionally, catalyzes the phosphorylation of the position 2 hydroxy group of 4-diphosphocytidyl-2C-methyl-D-erythritol. The chain is 4-diphosphocytidyl-2-C-methyl-D-erythritol kinase from Pseudomonas putida (strain ATCC 47054 / DSM 6125 / CFBP 8728 / NCIMB 11950 / KT2440).